Here is a 162-residue protein sequence, read N- to C-terminus: MAAPKARALGPEEKDECMKIFDIFDRNAENIAPVSDTMDMLTKLGQTYTKRETEAIMKEARGPKGDKKNIGPEEWLTLCSKWVRQDDEEEILRAFKVFDANGDGVIDFDEFKFIMQKVGEEPLTDAEVEEAMKEADEDGNGVIDIPEFMDLIKKSKNALKES.

Position 2 is an N-acetylalanine (alanine 2). EF-hand domains are found at residues 12–47 (EEKD…LGQT), 49–84 (TKRE…KWVR), 86–121 (DDEE…VGEE), and 123–158 (LTDA…SKNA). Lysine 96 is modified (N6,N6,N6-trimethyllysine). Ca(2+) contacts are provided by aspartate 99, asparagine 101, aspartate 103, and glutamate 110. Lysine 117 carries the post-translational modification N6,N6,N6-trimethyllysine. Aspartate 136, aspartate 138, asparagine 140, and glutamate 147 together coordinate Ca(2+).

The protein localises to the cytoplasm. Functionally, the exact function of this protein is not yet known. It interacts with CAVPT, a protein also of unknown function, in a calcium-dependent way. This protein binds two calcium ions. This is Calcium vector protein from Branchiostoma lanceolatum (Common lancelet).